A 246-amino-acid chain; its full sequence is Bidirectional sugar transporter SWEET3a (246 aa).

At 1–6 the chain is on the extracellular side; that stretch reads MFPDIR. A helical transmembrane segment spans residues 7–27; that stretch reads FIVGIIGSVACMLLYSAPILT. In terms of domain architecture, MtN3/slv 1 spans 7–96; it reads FIVGIIGSVA…ISIYVWFAPR (90 aa). At 28 to 42 the chain is on the cytoplasmic side; sequence FKRVIKKASVEEFSC. Residues 43–63 form a helical membrane-spanning segment; it reads IPYILALFSCLTYSWYGFPVV. The Extracellular segment spans residues 64–74; the sequence is SYGWENMTVCS. Asparagine 69 is a glycosylation site (N-linked (GlcNAc...) asparagine). The chain crosses the membrane as a helical span at residues 75 to 95; that stretch reads ISSLGVLFEGTFISIYVWFAP. The Cytoplasmic segment spans residues 96 to 101; it reads RGKKKQ. Residues 102-122 traverse the membrane as a helical segment; that stretch reads VMLMASLILAVFCMTVFFSSF. At 123–131 the chain is on the extracellular side; that stretch reads SIHNHHIRK. The helical transmembrane segment at 132–152 threads the bilayer; it reads VFVGSVGLVSSISMYGSPLVA. Positions 133–217 constitute a MtN3/slv 2 domain; it reads FVGSVGLVSS…VVYCIYSKCK (85 aa). Residues 153–166 are Cytoplasmic-facing; it reads MKQVIRTKSVEFMP. A helical membrane pass occupies residues 167–187; that stretch reads FYLSLFTLFTSLTWMAYGVIG. At 188–191 the chain is on the extracellular side; the sequence is RDPF. A helical transmembrane segment spans residues 192-212; that stretch reads IATPNCIGSIMGILQLVVYCI. At 213–246 the chain is on the cytoplasmic side; the sequence is YSKCKEAPKVLHDIEQANVVKIPTSHVDTKGHNP.

This sequence belongs to the SWEET sugar transporter family. In terms of assembly, forms homooligomers and/or heterooligomers.

Its subcellular location is the cell membrane. In terms of biological role, mediates both low-affinity uptake and efflux of sugar across the plasma membrane. This Oryza sativa subsp. japonica (Rice) protein is Bidirectional sugar transporter SWEET3a (SWEET3A).